The sequence spans 281 residues: Polyamine aminopropyltransferase (281 aa).

Residues 2–237 (EIWYTEKLEL…GIIGFTFLSN (236 aa)) form the PABS domain. S-methyl-5'-thioadenosine is bound at residue Gln33. Spermidine contacts are provided by His64 and Asp88. S-methyl-5'-thioadenosine-binding positions include Glu108 and 139 to 140 (DG). Asp157 functions as the Proton acceptor in the catalytic mechanism. Residue 157 to 160 (DSSD) coordinates spermidine. Pro164 lines the S-methyl-5'-thioadenosine pocket.

The protein belongs to the spermidine/spermine synthase family. Homodimer or homotetramer.

It localises to the cytoplasm. The enzyme catalyses S-adenosyl 3-(methylsulfanyl)propylamine + putrescine = S-methyl-5'-thioadenosine + spermidine + H(+). Its pathway is amine and polyamine biosynthesis; spermidine biosynthesis; spermidine from putrescine: step 1/1. Functionally, catalyzes the irreversible transfer of a propylamine group from the amino donor S-adenosylmethioninamine (decarboxy-AdoMet) to putrescine (1,4-diaminobutane) to yield spermidine. The sequence is that of Polyamine aminopropyltransferase from Leptospira biflexa serovar Patoc (strain Patoc 1 / Ames).